We begin with the raw amino-acid sequence, 147 residues long: Sentan (147 aa).

The disordered stretch occupies residues 1–36 (MGGCMHSTWDHALHSRGEPRPSEAPASISAPSKMPK). Basic and acidic residues predominate over residues 8–21 (TWDHALHSRGEPRP). The span at 23–32 (EAPASISAPS) shows a compositional bias: low complexity.

Belongs to the S-100 family. In terms of tissue distribution, expressed exclusively in ciliated epithelial cells. Detected in ciliated epithelium of trachea and oviduct (at protein level).

The protein localises to the cell projection. It localises to the cilium. In terms of biological role, may be a component of the linker structure that bridges the ciliary membrane and peripheral singlet microtubules. In Mus musculus (Mouse), this protein is Sentan (Sntn).